The chain runs to 121 residues: Putative inactive aspartokinase 3 HI_1632 (121 aa).

The protein belongs to the aspartokinase family.

In Haemophilus influenzae (strain ATCC 51907 / DSM 11121 / KW20 / Rd), this protein is Putative inactive aspartokinase 3 HI_1632.